A 258-amino-acid polypeptide reads, in one-letter code: Imidazole glycerol phosphate synthase subunit HisF (258 aa).

Catalysis depends on residues aspartate 11 and aspartate 130.

The protein belongs to the HisA/HisF family. As to quaternary structure, heterodimer of HisH and HisF.

The protein localises to the cytoplasm. The enzyme catalyses 5-[(5-phospho-1-deoxy-D-ribulos-1-ylimino)methylamino]-1-(5-phospho-beta-D-ribosyl)imidazole-4-carboxamide + L-glutamine = D-erythro-1-(imidazol-4-yl)glycerol 3-phosphate + 5-amino-1-(5-phospho-beta-D-ribosyl)imidazole-4-carboxamide + L-glutamate + H(+). It functions in the pathway amino-acid biosynthesis; L-histidine biosynthesis; L-histidine from 5-phospho-alpha-D-ribose 1-diphosphate: step 5/9. Functionally, IGPS catalyzes the conversion of PRFAR and glutamine to IGP, AICAR and glutamate. The HisF subunit catalyzes the cyclization activity that produces IGP and AICAR from PRFAR using the ammonia provided by the HisH subunit. The polypeptide is Imidazole glycerol phosphate synthase subunit HisF (Lachnoclostridium phytofermentans (strain ATCC 700394 / DSM 18823 / ISDg) (Clostridium phytofermentans)).